A 415-amino-acid chain; its full sequence is Glutamyl-tRNA reductase (415 aa).

Residues 49–52 (TCNR), serine 106, 111–113 (EPQ), and glutamine 117 each bind substrate. Residue cysteine 50 is the Nucleophile of the active site. Position 186-191 (186-191 (GAGETI)) interacts with NADP(+).

The protein belongs to the glutamyl-tRNA reductase family. As to quaternary structure, homodimer.

The catalysed reaction is (S)-4-amino-5-oxopentanoate + tRNA(Glu) + NADP(+) = L-glutamyl-tRNA(Glu) + NADPH + H(+). It functions in the pathway porphyrin-containing compound metabolism; protoporphyrin-IX biosynthesis; 5-aminolevulinate from L-glutamyl-tRNA(Glu): step 1/2. Catalyzes the NADPH-dependent reduction of glutamyl-tRNA(Glu) to glutamate 1-semialdehyde (GSA). This is Glutamyl-tRNA reductase from Teredinibacter turnerae (strain ATCC 39867 / T7901).